The following is a 241-amino-acid chain: Proteasome subunit beta type-1 (241 aa).

M1 carries the post-translational modification N-acetylmethionine. The propeptide occupies 1-28 (MLSSTAMYSAPGRDLGMEPHRAAGPLQL). S58 is a glycosylation site (O-linked (GlcNAc) serine). Phosphoserine occurs at positions 62 and 68. Y150 is modified (phosphotyrosine). Position 162 is a phosphoserine (S162). K204 carries the N6-acetyllysine modification. A glycan (O-linked (GlcNAc) serine) is linked at S209.

Belongs to the peptidase T1B family. The 26S proteasome consists of a 20S proteasome core and two 19S regulatory subunits. The 20S proteasome core is a barrel-shaped complex made of 28 subunits that are arranged in four stacked rings. The two outer rings are each formed by seven alpha subunits, and the two inner rings are formed by seven beta subunits. The proteolytic activity is exerted by three beta-subunits PSMB5, PSMB6 and PSMB7. Interacts with SERPINB2. Interacts with RFPL4A. As to quaternary structure, (Microbial infection) Interacts with HIV-1 protein Tat.

Its subcellular location is the cytoplasm. The protein localises to the nucleus. Its function is as follows. Non-catalytic component of the 20S core proteasome complex involved in the proteolytic degradation of most intracellular proteins. This complex plays numerous essential roles within the cell by associating with different regulatory particles. Associated with two 19S regulatory particles, forms the 26S proteasome and thus participates in the ATP-dependent degradation of ubiquitinated proteins. The 26S proteasome plays a key role in the maintenance of protein homeostasis by removing misfolded or damaged proteins that could impair cellular functions, and by removing proteins whose functions are no longer required. Associated with the PA200 or PA28, the 20S proteasome mediates ubiquitin-independent protein degradation. This type of proteolysis is required in several pathways including spermatogenesis (20S-PA200 complex) or generation of a subset of MHC class I-presented antigenic peptides (20S-PA28 complex). The sequence is that of Proteasome subunit beta type-1 from Homo sapiens (Human).